The primary structure comprises 191 residues: Cytochrome b-245 light chain (191 aa).

Residues 2 to 7 lie on the Cytoplasmic side of the membrane; that stretch reads GQIEWA. A helical transmembrane segment spans residues 8–30; sequence MWANEQALASGLILITGGIVATA. Over 31-35 the chain is Extracellular; it reads GQFTQ. The chain crosses the membrane as a helical span at residues 36–53; that stretch reads WYLGAYSIAAGVLVCLLE. The Cytoplasmic portion of the chain corresponds to 54-69; sequence YPRGKRSKGSTMERCG. The stretch at 70–80 is an intramembrane region; sequence QKYLTRVVKLF. The Cytoplasmic segment spans residues 81–86; the sequence is GPLTRN. A helical membrane pass occupies residues 87–104; the sequence is YYIRAFLHLGLAVPAGFL. A topological domain (extracellular) is located at residue Leu105. Residues 106-126 form a helical membrane-spanning segment; sequence ATILGTACLAIASGIYLLAAI. Residues 127–191 lie on the Cytoplasmic side of the membrane; that stretch reads RGEQWSPIEP…NPMPVNDEVV (65 aa). The segment at 134–191 is disordered; the sequence is IEPKPKERPQIGGTIKQPPSNPPPRPPAEARKKLSEEAAGVPTGGPQENPMPVNDEVV. Residue Thr147 is modified to Phosphothreonine. Residue Lys149 forms a Glycyl lysine isopeptide (Lys-Gly) (interchain with G-Cter in ubiquitin) linkage. Ser168 carries the phosphoserine modification.

Belongs to the p22phox family. As to quaternary structure, component of the phagocyte NADPH oxidase core complex/cytochrome b558 complex, composed of CYBB (heavy chain (beta)) and CYBA (light chain (alpha)). Component of the phagocyte NADPH oxidase complex composed of an obligatory core heterodimer formed by the membrane proteins CYBA and CYBB and the cytosolic regulatory subunits NCF1/p47-phox, NCF2/p67-phox, NCF4/p40-phox and the small GTPase RAC1 or RAC2. Interacts with NCF1 (via SH3 domain). Interacts with SH3PXD2A. Interacts with DUOX1, DUOX2 and TPO. Interacts with NOX4; this interaction mediates superoxide generation. Interacts with calprotectin (S100A8/9). Interacts with GBP7. Interacts with NOXO1. Forms a heterodimer with NOX3 and is essential for activity and cell membrane localization of NOX3. Interacts with NOX1. In terms of processing, phosphorylation at Thr-147 enhances NADPH oxidase activity by promoting NCF1/p47-phox binding. Post-translationally, ubiquitinated at Lys-149 likely by RNF145.

It localises to the cell membrane. Subunit of NADPH oxidase complexes that is required for the NADPH oxidase activity that generates, in various cell types, superoxide from molecular oxygen utilizing NADPH as an electron donor. Subunit of the phagocyte NADPH oxidase complex that mediates the transfer of electrons from cytosolic NADPH to O2 to produce the superoxide anion (O2(-)). In the activated complex, electrons are first transferred from NADPH to flavin adenine dinucleotide (FAD) and subsequently transferred via two heme molecules to molecular oxygen, producing superoxide through an outer-sphere reaction. Activation of the NADPH oxidase complex is initiated by the assembly of cytosolic subunits of the NADPH oxidase complex with the core NADPH oxidase complex to form a complex at the plasma membrane or phagosomal membrane. This activation process is initiated by phosphorylation dependent binding of the cytosolic NCF1/p47-phox subunit to the C-terminus of CYBA/p22-phox. Aassociates with NOX3 to form a functional NADPH oxidase constitutively generating superoxide. The protein is Cytochrome b-245 light chain of Bison bison (American bison).